Reading from the N-terminus, the 467-residue chain is Uronate isomerase (467 aa).

It belongs to the metallo-dependent hydrolases superfamily. Uronate isomerase family.

The enzyme catalyses D-glucuronate = D-fructuronate. It catalyses the reaction aldehydo-D-galacturonate = keto-D-tagaturonate. Its pathway is carbohydrate metabolism; pentose and glucuronate interconversion. In Mannheimia succiniciproducens (strain KCTC 0769BP / MBEL55E), this protein is Uronate isomerase.